A 672-amino-acid polypeptide reads, in one-letter code: Glycerophosphocholine phosphodiesterase GPCPD1 (672 aa).

The 113-residue stretch at 1–113 folds into the CBM20 domain; sequence MTPSQVTFEI…IIIDDGQFGI (113 aa). Substrate contacts are provided by residues arginine 68 and 86–87; that span reads HK. The residue at position 175 (serine 175) is a Phosphoserine. The 301-residue stretch at 318 to 618 folds into the GP-PDE domain; it reads PLDVGHRGAG…DRIYDWMPEQ (301 aa). The residue at position 608 (tyrosine 608) is a Phosphotyrosine.

It belongs to the glycerophosphoryl diester phosphodiesterase family.

It is found in the cytoplasm. The protein resides in the cytosol. It carries out the reaction sn-glycerol 3-phosphocholine + H2O = sn-glycerol 3-phosphate + choline + H(+). Functionally, may be involved in the negative regulation of skeletal muscle differentiation, independently of its glycerophosphocholine phosphodiesterase activity. This Rattus norvegicus (Rat) protein is Glycerophosphocholine phosphodiesterase GPCPD1 (Gpcpd1).